The primary structure comprises 273 residues: Undecaprenyl-diphosphatase (273 aa).

7 consecutive transmembrane segments (helical) span residues 6–26 (SLLI…LPVS), 45–65 (AKTF…VMFW), 90–110 (LTLI…LVFH), 116–136 (LFNP…LIAA), 190–210 (YAAS…ATVL), 222–242 (ADIP…LIAI), and 252–272 (ISFI…YVVF).

The protein belongs to the UppP family.

Its subcellular location is the cell inner membrane. The enzyme catalyses di-trans,octa-cis-undecaprenyl diphosphate + H2O = di-trans,octa-cis-undecaprenyl phosphate + phosphate + H(+). Catalyzes the dephosphorylation of undecaprenyl diphosphate (UPP). Confers resistance to bacitracin. This is Undecaprenyl-diphosphatase from Salmonella paratyphi C (strain RKS4594).